The chain runs to 161 residues: Urease accessory protein UreE (161 aa).

The tract at residues 133–161 (EPEAGAYQSAPHSHSHAHDHPFVRLPAHS) is disordered.

It belongs to the UreE family.

The protein resides in the cytoplasm. Its function is as follows. Involved in urease metallocenter assembly. Binds nickel. Probably functions as a nickel donor during metallocenter assembly. The polypeptide is Urease accessory protein UreE (Pseudomonas putida (strain W619)).